A 66-amino-acid chain; its full sequence is Potassium channel toxin alpha-KTx 30.1 (66 aa).

A signal peptide spans 1–24 (MNTGFFFFVIMATGLVLTFDTIHA). 3 disulfides stabilise this stretch: Cys30–Cys50, Cys36–Cys55, and Cys40–Cys57.

It belongs to the short scorpion toxin superfamily. Potassium channel inhibitor family. Alpha-KTx 30 subfamily. As to expression, expressed by the venom gland.

It localises to the secreted. Inhibits Kv1.3/KCNA3 channel (1 uM of the toxin inhibits currents by 64.1%). The chain is Potassium channel toxin alpha-KTx 30.1 from Scorpiops margerisonae (Scorpion).